The sequence spans 568 residues: Protein KATNIP homolog (568 aa).

Residues 1–20 are compositionally biased toward basic and acidic residues; that stretch reads MSDSDLKEIEKNAENIKLEP. The tract at residues 1–30 is disordered; that stretch reads MSDSDLKEIEKNAENIKLEPAEDEVNEEDQ. A compositionally biased stretch (acidic residues) spans 21–30; it reads AEDEVNEEDQ.

As to expression, expressed in most ciliated neuronal cells. Not expressed in non-ciliated cells.

The protein localises to the cytoplasm. It localises to the cytoskeleton. It is found in the cilium axoneme. The protein resides in the cilium basal body. Functionally, may regulate ciliary A-tubule number and, along with arl-13, controls cilium integrity. The chain is Protein KATNIP homolog from Caenorhabditis elegans.